The sequence spans 122 residues: Large ribosomal subunit protein uL14 (122 aa).

It belongs to the universal ribosomal protein uL14 family. As to quaternary structure, part of the 50S ribosomal subunit. Forms a cluster with proteins L3 and L19. In the 70S ribosome, L14 and L19 interact and together make contacts with the 16S rRNA in bridges B5 and B8.

Binds to 23S rRNA. Forms part of two intersubunit bridges in the 70S ribosome. The protein is Large ribosomal subunit protein uL14 of Corynebacterium glutamicum (strain R).